The primary structure comprises 270 residues: Aquaporin-11 (270 aa).

2 helical membrane passes run isoleucine 5–cysteine 25 and phenylalanine 59–phenylalanine 79. Residues aspartate 94–serine 96 carry the NPA 1 motif. A helical membrane pass occupies residues isoleucine 120–alanine 140. Asparagine 148 is a glycosylation site (N-linked (GlcNAc...) asparagine). Transmembrane regions (helical) follow at residues alanine 153–asparagine 173 and methionine 184–glycine 204. The NPA 2 signature appears at asparagine 207–threonine 209. The chain crosses the membrane as a helical span at residues glycine 220–isoleucine 240.

This sequence belongs to the MIP/aquaporin (TC 1.A.8) family.

It localises to the membrane. It catalyses the reaction H2O(in) = H2O(out). Probable intracellular unorthodox aquaporin that may modulate the water content and osmolytes during anhydrobiosis. This chain is Aquaporin-11, found in Milnesium tardigradum (Water bear).